We begin with the raw amino-acid sequence, 509 residues long: MGLPWYRVHTVELNDPGRLLAVHMMHTALVAGWAGSMALYELAVFDPSDPVLDPMWRQGMFVIPFMTRLGITKSWGGWSITGGTITNPGIWSYEGVAGSHIVFSGLCFLAAIWHWVYWDLEIFCDDRTGKPSLDLPKIFGIHLFLSGVACFGFGAFHVTGLYGPGIWVSDPYGLTGKVQSVNPAWGVEGFDPFVPGGIASHHIAAGTLGILAGLFHLSVRPPQRLYKGLRMGNIETVLSSSSIAAVFFAAFVVAGTMWYGSATTPIELFGPTRYQWDQGYFQQEIYRRVGTGLAENQSLSEAWSKIPEKLAFYDYIGNNPAKGGLFRAGSMDNGDGIAIGWLGHPLIRDKEGRDVFVRRIPTFFETFRVVLDDDDGMVRADVPFRRAESKYSVEQVGVTVEFYGGELNGVSYSDPATVKKYARRAQLGEIFELDRATLKSDGVFRSSPRGWFTFGHASFALLFFFGHIWHGSRTLFRDVFAGIDPDLDAQVEFGAFQKLGDPTTRRQVV.

6 helical membrane-spanning segments follow: residues 21–36 (AVHMMHTALVAGWAGS), 101–115 (IVFSGLCFLAAIWHW), 140–156 (GIHLFLSGVACFGFGAF), 203–218 (IAAGTLGILAGLFHLS), 237–253 (VLSSSSIAAVFFAAFVV), and 458–473 (SFALLFFFGHIWHGSR).

It belongs to the PsbB/PsbC family. PsbB subfamily. PSII is composed of 1 copy each of membrane proteins PsbA, PsbB, PsbC, PsbD, PsbE, PsbF, PsbH, PsbI, PsbJ, PsbK, PsbL, PsbM, PsbT, PsbX, PsbY, PsbZ, Psb30/Ycf12, at least 3 peripheral proteins of the oxygen-evolving complex and a large number of cofactors. It forms dimeric complexes. The cofactor is Binds multiple chlorophylls. PSII binds additional chlorophylls, carotenoids and specific lipids..

It is found in the plastid. The protein localises to the chloroplast thylakoid membrane. Its function is as follows. One of the components of the core complex of photosystem II (PSII). It binds chlorophyll and helps catalyze the primary light-induced photochemical processes of PSII. PSII is a light-driven water:plastoquinone oxidoreductase, using light energy to abstract electrons from H(2)O, generating O(2) and a proton gradient subsequently used for ATP formation. The protein is Photosystem II CP47 reaction center protein of Populus deltoides (Eastern poplar).